The sequence spans 50 residues: Peroxiredoxin-6 (50 aa).

A Thioredoxin domain is found at aspartate 1–arginine 50. Position 3 is a phosphothreonine (threonine 3). Cysteine 6 serves as the catalytic Cysteine sulfenic acid (-SOH) intermediate; for peroxidase activity. Residue lysine 19 is modified to N6-acetyllysine. The active-site For phospholipase activity is aspartate 28.

Belongs to the peroxiredoxin family. Prx6 subfamily. Homodimer. Interacts with GSTP1; mediates PRDX6 glutathionylation and regeneration. Interacts with APEX1. Interacts with STH. May interact with FAM168B. May interact with HTR2A. Irreversibly inactivated by overoxidation of Cys-6 to sulfinic acid (Cys-SO(2)H) and sulfonic acid (Cys-SO(3)H) forms upon oxidative stress. Post-translationally, phosphorylation at Thr-177 by MAP kinases increases the phospholipase activity of the enzyme. The phosphorylated form exhibits a greater lysophosphatidylcholine acyltransferase activity compared to the non-phosphorylated form.

The protein localises to the cytoplasm. It localises to the lysosome. It catalyses the reaction a hydroperoxide + 2 glutathione = an alcohol + glutathione disulfide + H2O. The enzyme catalyses a 1,2-diacyl-sn-glycero-3-phosphocholine + H2O = a 1-acyl-sn-glycero-3-phosphocholine + a fatty acid + H(+). The catalysed reaction is a 1-acyl-sn-glycero-3-phosphocholine + an acyl-CoA = a 1,2-diacyl-sn-glycero-3-phosphocholine + CoA. It carries out the reaction 1-hexadecanoyl-sn-glycero-3-phosphocholine + hexadecanoyl-CoA = 1,2-dihexadecanoyl-sn-glycero-3-phosphocholine + CoA. It catalyses the reaction 1,2-dihexadecanoyl-sn-glycero-3-phosphocholine + H2O = 1-hexadecanoyl-sn-glycero-3-phosphocholine + hexadecanoate + H(+). In terms of biological role, thiol-specific peroxidase that catalyzes the reduction of hydrogen peroxide and organic hydroperoxides to water and alcohols, respectively. Can reduce H(2)O(2) and short chain organic, fatty acid, and phospholipid hydroperoxides. Also has phospholipase activity, and can therefore either reduce the oxidized sn-2 fatty acyl group of phospholipids (peroxidase activity) or hydrolyze the sn-2 ester bond of phospholipids (phospholipase activity). These activities are dependent on binding to phospholipids at acidic pH and to oxidized phospholipds at cytosolic pH. Plays a role in cell protection against oxidative stress by detoxifying peroxides and in phospholipid homeostasis. Exhibits acyl-CoA-dependent lysophospholipid acyltransferase which mediates the conversion of lysophosphatidylcholine (1-acyl-sn-glycero-3-phosphocholine or LPC) into phosphatidylcholine (1,2-diacyl-sn-glycero-3-phosphocholine or PC). Shows a clear preference for LPC as the lysophospholipid and for palmitoyl CoA as the fatty acyl substrate. This is Peroxiredoxin-6 from Mesocricetus auratus (Golden hamster).